A 318-amino-acid polypeptide reads, in one-letter code: L-lactate dehydrogenase (318 aa).

NAD(+)-binding positions include Val-18, Asp-39, Lys-44, Tyr-69, and 83-84 (GA). Residues Gln-86 and Arg-92 each coordinate substrate. NAD(+) is bound by residues Ser-105, 122–124 (VSN), and Ser-147. 124 to 127 (NPVD) serves as a coordination point for substrate. A substrate-binding site is contributed by 152–155 (DTSR). The active-site Proton acceptor is the His-179. Position 225 is a phosphotyrosine (Tyr-225). A substrate-binding site is contributed by Thr-234.

This sequence belongs to the LDH/MDH superfamily. LDH family. Homotetramer.

The protein localises to the cytoplasm. It carries out the reaction (S)-lactate + NAD(+) = pyruvate + NADH + H(+). It participates in fermentation; pyruvate fermentation to lactate; (S)-lactate from pyruvate: step 1/1. Functionally, catalyzes the conversion of lactate to pyruvate. This Clostridium botulinum (strain Kyoto / Type A2) protein is L-lactate dehydrogenase.